The chain runs to 257 residues: Transmembrane protein 101 (257 aa).

Helical transmembrane passes span 21–40, 52–72, 77–97, 110–130, 139–159, 182–202, 206–226, and 233–253; these read VLLT…LYAE, VPYL…MSFG, WFAL…YIGG, YSRT…AGEL, SLQS…AYSL, LFFV…YVTL, ILAV…AYWH, and FWNQ…AVIL.

It localises to the membrane. In terms of biological role, may activate NF-kappa-B signaling pathways. This chain is Transmembrane protein 101 (TMEM101), found in Pongo abelii (Sumatran orangutan).